We begin with the raw amino-acid sequence, 423 residues long: UDP-N-acetylglucosamine 1-carboxyvinyltransferase (423 aa).

21 to 22 (KN) serves as a coordination point for phosphoenolpyruvate. R92 lines the UDP-N-acetyl-alpha-D-glucosamine pocket. Catalysis depends on C116, which acts as the Proton donor. Residue C116 is modified to 2-(S-cysteinyl)pyruvic acid O-phosphothioketal. Residues D305 and V327 each contribute to the UDP-N-acetyl-alpha-D-glucosamine site.

It belongs to the EPSP synthase family. MurA subfamily.

It localises to the cytoplasm. The catalysed reaction is phosphoenolpyruvate + UDP-N-acetyl-alpha-D-glucosamine = UDP-N-acetyl-3-O-(1-carboxyvinyl)-alpha-D-glucosamine + phosphate. Its pathway is cell wall biogenesis; peptidoglycan biosynthesis. Functionally, cell wall formation. Adds enolpyruvyl to UDP-N-acetylglucosamine. This is UDP-N-acetylglucosamine 1-carboxyvinyltransferase from Fervidobacterium nodosum (strain ATCC 35602 / DSM 5306 / Rt17-B1).